The primary structure comprises 386 residues: Chaperone protein DnaJ (386 aa).

The region spanning Asp6–Gly70 is the J domain. A CR-type zinc finger spans residues Gly141–Thr223. Residues Cys154, Cys157, Cys171, Cys174, Cys197, Cys200, Cys211, and Cys214 each coordinate Zn(2+). CXXCXGXG motif repeat units lie at residues Cys154–Gly161, Cys171–Gly178, Cys197–Gly204, and Cys211–Gly218. The segment at Leu363–Lys386 is disordered. Over residues Thr364 to Glu374 the composition is skewed to polar residues. A compositionally biased stretch (basic and acidic residues) spans Phe376–Lys386.

The protein belongs to the DnaJ family. Homodimer. The cofactor is Zn(2+).

The protein localises to the cytoplasm. Functionally, participates actively in the response to hyperosmotic and heat shock by preventing the aggregation of stress-denatured proteins and by disaggregating proteins, also in an autonomous, DnaK-independent fashion. Unfolded proteins bind initially to DnaJ; upon interaction with the DnaJ-bound protein, DnaK hydrolyzes its bound ATP, resulting in the formation of a stable complex. GrpE releases ADP from DnaK; ATP binding to DnaK triggers the release of the substrate protein, thus completing the reaction cycle. Several rounds of ATP-dependent interactions between DnaJ, DnaK and GrpE are required for fully efficient folding. Also involved, together with DnaK and GrpE, in the DNA replication of plasmids through activation of initiation proteins. This chain is Chaperone protein DnaJ, found in Tetragenococcus halophilus (Pediococcus halophilus).